Reading from the N-terminus, the 500-residue chain is Recombining binding protein suppressor of hairless (500 aa).

The segment at 1–30 (MDHTEGSPAEEPPAHAPSPGKFGERPPPKR) is disordered. 2 DNA-binding regions span residues 57–67 (QKSYGNEKRFF) and 165–170 (SKPSKK). Lysine 175 is subject to N6-acetyllysine. The interval 192 to 197 (RLRSQT) is DNA-binding. The region spanning 355-445 (PVVESLQLNG…YSTSLTFTYT (91 aa)) is the IPT/TIG domain. The span at 465–481 (SSQVPPNESNTNSEGSY) shows a compositional bias: polar residues. The tract at residues 465 to 500 (SSQVPPNESNTNSEGSYTNASTNSTSVTSSTATVVS) is disordered. Residues 482 to 500 (TNASTNSTSVTSSTATVVS) show a composition bias toward low complexity.

Belongs to the Su(H) family. In terms of assembly, interacts with activated NOTCH1, NOTCH2 or NOTCH3. Interacts with MINT/SHARP. This interaction may mediate the recruitment of large corepressor complexes containing proteins such as HDAC1, HDAC2, NCOR2, SAP30, FHL1/KYOT2 and CIR1. Interacts with EP300, MAML1 and PTF1A. Interacts with RITA1/C12orf52, leading to nuclear export, prevent the interaction between RBPJ and NICD product and subsequent down-regulation of the Notch signaling pathway. Interacts with SNW1. Interacts with CHCHD2 and CXXC5. Interacts with BEND6 (via BEN domain). Interacts with NKAPL. Interacts with ZMIZ1. Interacts with RBM15. Interacts with L3MBTL3 and KDM1A; the interaction with KDM1A is weaker in the absence of L3MBTL3 and the interaction with L3MBTL3 is impaired by Notch-derived peptide containing the intracellular domain (NICD). (Microbial infection) Interacts with EBV EBNA2. Interacts with EBV EBNA3. Interacts with EBV EBNA4. Interacts with EBV EBNA6 (via N-terminus).

The protein localises to the nucleus. Its subcellular location is the cytoplasm. Functionally, transcriptional regulator that plays a central role in Notch signaling, a signaling pathway involved in cell-cell communication that regulates a broad spectrum of cell-fate determinations. Acts as a transcriptional repressor when it is not associated with Notch proteins. When associated with some NICD product of Notch proteins (Notch intracellular domain), it acts as a transcriptional activator that activates transcription of Notch target genes. Probably represses or activates transcription via the recruitment of chromatin remodeling complexes containing histone deacetylase or histone acetylase proteins, respectively. Specifically binds to the immunoglobulin kappa-type J segment recombination signal sequence. Binds specifically to methylated DNA. Binds to the oxygen responsive element of COX4I2 and activates its transcription under hypoxia conditions (4% oxygen). Negatively regulates the phagocyte oxidative burst in response to bacterial infection by repressing transcription of NADPH oxidase subunits. The sequence is that of Recombining binding protein suppressor of hairless from Homo sapiens (Human).